The sequence spans 316 residues: tRNA dimethylallyltransferase (316 aa).

17 to 24 (GPTASGKT) provides a ligand contact to ATP. Residue 19 to 24 (TASGKT) coordinates substrate. Interaction with substrate tRNA regions lie at residues 42-45 (DSVL), 166-170 (QRLSR), 247-252 (RCVGYR), and 280-287 (KRQITWLR).

Belongs to the IPP transferase family. In terms of assembly, monomer. The cofactor is Mg(2+).

It catalyses the reaction adenosine(37) in tRNA + dimethylallyl diphosphate = N(6)-dimethylallyladenosine(37) in tRNA + diphosphate. Catalyzes the transfer of a dimethylallyl group onto the adenine at position 37 in tRNAs that read codons beginning with uridine, leading to the formation of N6-(dimethylallyl)adenosine (i(6)A). This chain is tRNA dimethylallyltransferase, found in Shigella flexneri.